The chain runs to 760 residues: Probable ubiquitin carboxyl-terminal hydrolase creB (760 aa).

The interval 1 to 28 (MGSFLRSFRNNAGSTTPSVGAVPAKKEV) is disordered. Positions 8–18 (FRNNAGSTTPS) are enriched in polar residues. In terms of domain architecture, USP spans 55–469 (YGMENYGNTC…CAYVLFYQET (415 aa)). C64 (nucleophile) is an active-site residue. Disordered regions lie at residues 114–146 (AEAQ…DSPD) and 242–270 (PAAI…KTPN). Residues 258 to 270 (VDQSASSGSKTPN) are compositionally biased toward polar residues. Catalysis depends on H420, which acts as the Proton acceptor. A disordered region spans residues 520 to 760 (EEHNRPNGLK…LRKKSFSILS (241 aa)). A coiled-coil region spans residues 575–635 (KSDVQGKKER…AALEASKASK (61 aa)). 3 stretches are compositionally biased toward basic and acidic residues: residues 578-626 (VQGK…ELKA), 635-651 (KAQE…KDKL), and 708-742 (DPKD…ERTG). Over residues 743-760 (HGKWRSFSLRKKSFSILS) the composition is skewed to basic residues.

The protein belongs to the peptidase C19 family. As to quaternary structure, interacts with creA, creC and qutD.

The catalysed reaction is Thiol-dependent hydrolysis of ester, thioester, amide, peptide and isopeptide bonds formed by the C-terminal Gly of ubiquitin (a 76-residue protein attached to proteins as an intracellular targeting signal).. Functionally, ubiquitin thioesterase component of the regulatory network controlling carbon source utilization through ubiquitination and deubiquitination involving creA, creB, creC, creD and acrB. Deubiquitinates the creA catabolic repressor and the quinate permease qutD. Also plays a role in response to carbon starvation and the control of extracellular proteases activity. The sequence is that of Probable ubiquitin carboxyl-terminal hydrolase creB (creB) from Aspergillus clavatus (strain ATCC 1007 / CBS 513.65 / DSM 816 / NCTC 3887 / NRRL 1 / QM 1276 / 107).